A 161-amino-acid chain; its full sequence is Glutaredoxin-2, mitochondrial (161 aa).

Residues 1-19 (MLWRRAALAGTRLVWSRSG) constitute a mitochondrion transit peptide. Residue Ser20 is modified to Phosphoserine. The Glutaredoxin domain maps to 54-154 (VNQIQETISD…PLVHQCYLKK (101 aa)). Position 65 (Cys65) interacts with [2Fe-2S] cluster. Lys71 serves as a coordination point for glutathione. Cys74 bears the S-glutathionyl cysteine; alternate mark. Cys74 and Cys77 are oxidised to a cystine. Glutathione contacts are provided by Gln106 and Val118. Cys150 contacts [2Fe-2S] cluster.

It belongs to the glutaredoxin family. In terms of assembly, monomer; active form. Homodimer; inactive form. The homodimer is probably linked by 1 2Fe-2S cluster.

It is found in the mitochondrion. With respect to regulation, the 2Fe-2S present in the homodimer leads to inactivation of the enzyme. The 2Fe-2S may serve as a redox sensor: the presence of one-electron oxidants or reductants leading to the loss of the 2Fe-2S cluster, subsequent monomerization and activation of the enzyme. Glutathione-dependent oxidoreductase that facilitates the maintenance of mitochondrial redox homeostasis upon induction of apoptosis by oxidative stress. Involved in response to hydrogen peroxide and regulation of apoptosis caused by oxidative stress. Acts as a very efficient catalyst of monothiol reactions because of its high affinity for protein glutathione-mixed disulfides. Can receive electrons not only from glutathione (GSH), but also from thioredoxin reductase supporting both monothiol and dithiol reactions. Efficiently catalyzes both glutathionylation and deglutathionylation of mitochondrial complex I, which in turn regulates the superoxide production by the complex. Overexpression decreases the susceptibility to apoptosis and prevents loss of cardiolipin and cytochrome c release. The sequence is that of Glutaredoxin-2, mitochondrial (GLRX2) from Pongo abelii (Sumatran orangutan).